Consider the following 622-residue polypeptide: Chaperone protein HscA homolog (622 aa).

Belongs to the heat shock protein 70 family.

Chaperone involved in the maturation of iron-sulfur cluster-containing proteins. Has a low intrinsic ATPase activity which is markedly stimulated by HscB. This chain is Chaperone protein HscA homolog, found in Pseudoalteromonas atlantica (strain T6c / ATCC BAA-1087).